The primary structure comprises 411 residues: Citrate synthase (411 aa).

Residues histidine 304 and aspartate 363 contribute to the active site.

It belongs to the citrate synthase family.

The catalysed reaction is oxaloacetate + acetyl-CoA + H2O = citrate + CoA + H(+). Its pathway is carbohydrate metabolism; tricarboxylic acid cycle; isocitrate from oxaloacetate: step 1/2. This is Citrate synthase (gltA) from Rickettsia canadensis.